The sequence spans 221 residues: GTP cyclohydrolase III (221 aa).

The protein belongs to the archaeal-type GTP cyclohydrolase family.

The catalysed reaction is GTP + 3 H2O = 2-amino-5-formylamino-6-(5-phospho-D-ribosylamino)pyrimidin-4(3H)-one + 2 phosphate + 2 H(+). Catalyzes the formation of 2-amino-5-formylamino-6-ribofuranosylamino-4(3H)-pyrimidinone ribonucleotide monophosphate and inorganic phosphate from GTP. Also has an independent pyrophosphate phosphohydrolase activity. This is GTP cyclohydrolase III from Pyrobaculum calidifontis (strain DSM 21063 / JCM 11548 / VA1).